Here is an 81-residue protein sequence, read N- to C-terminus: Large ribosomal subunit protein bL28 (81 aa).

It belongs to the bacterial ribosomal protein bL28 family.

In Gloeobacter violaceus (strain ATCC 29082 / PCC 7421), this protein is Large ribosomal subunit protein bL28.